The sequence spans 269 residues: Hydroxyacylglutathione hydrolase (269 aa).

Zn(2+) contacts are provided by His-56, His-58, Asp-60, His-61, His-115, Asp-137, and His-177.

This sequence belongs to the metallo-beta-lactamase superfamily. Glyoxalase II family. As to quaternary structure, monomer. It depends on Zn(2+) as a cofactor.

The catalysed reaction is an S-(2-hydroxyacyl)glutathione + H2O = a 2-hydroxy carboxylate + glutathione + H(+). It functions in the pathway secondary metabolite metabolism; methylglyoxal degradation; (R)-lactate from methylglyoxal: step 2/2. Its function is as follows. Thiolesterase that catalyzes the hydrolysis of S-D-lactoyl-glutathione to form glutathione and D-lactic acid. This Leptospira borgpetersenii serovar Hardjo-bovis (strain JB197) protein is Hydroxyacylglutathione hydrolase.